The sequence spans 148 residues: SsrA-binding protein (148 aa).

The segment at 128 to 148 (ESIAKKDQERNLKREFKNNNR) is disordered.

The protein belongs to the SmpB family.

The protein resides in the cytoplasm. In terms of biological role, required for rescue of stalled ribosomes mediated by trans-translation. Binds to transfer-messenger RNA (tmRNA), required for stable association of tmRNA with ribosomes. tmRNA and SmpB together mimic tRNA shape, replacing the anticodon stem-loop with SmpB. tmRNA is encoded by the ssrA gene; the 2 termini fold to resemble tRNA(Ala) and it encodes a 'tag peptide', a short internal open reading frame. During trans-translation Ala-aminoacylated tmRNA acts like a tRNA, entering the A-site of stalled ribosomes, displacing the stalled mRNA. The ribosome then switches to translate the ORF on the tmRNA; the nascent peptide is terminated with the 'tag peptide' encoded by the tmRNA and targeted for degradation. The ribosome is freed to recommence translation, which seems to be the essential function of trans-translation. This chain is SsrA-binding protein, found in Fusobacterium nucleatum subsp. nucleatum (strain ATCC 25586 / DSM 15643 / BCRC 10681 / CIP 101130 / JCM 8532 / KCTC 2640 / LMG 13131 / VPI 4355).